We begin with the raw amino-acid sequence, 155 residues long: Large ribosomal subunit protein uL13 (155 aa).

The protein belongs to the universal ribosomal protein uL13 family. As to quaternary structure, part of the 50S ribosomal subunit.

Functionally, this protein is one of the early assembly proteins of the 50S ribosomal subunit, although it is not seen to bind rRNA by itself. It is important during the early stages of 50S assembly. This is Large ribosomal subunit protein uL13 from Aeropyrum pernix (strain ATCC 700893 / DSM 11879 / JCM 9820 / NBRC 100138 / K1).